Reading from the N-terminus, the 270-residue chain is Ribosomal RNA small subunit methyltransferase A (270 aa).

6 residues coordinate S-adenosyl-L-methionine: Asn16, Leu18, Gly43, Glu64, Asp89, and Asn110.

Belongs to the class I-like SAM-binding methyltransferase superfamily. rRNA adenine N(6)-methyltransferase family. RsmA subfamily.

Its subcellular location is the cytoplasm. It catalyses the reaction adenosine(1518)/adenosine(1519) in 16S rRNA + 4 S-adenosyl-L-methionine = N(6)-dimethyladenosine(1518)/N(6)-dimethyladenosine(1519) in 16S rRNA + 4 S-adenosyl-L-homocysteine + 4 H(+). In terms of biological role, specifically dimethylates two adjacent adenosines (A1518 and A1519) in the loop of a conserved hairpin near the 3'-end of 16S rRNA in the 30S particle. May play a critical role in biogenesis of 30S subunits. The sequence is that of Ribosomal RNA small subunit methyltransferase A from Pseudomonas fluorescens (strain ATCC BAA-477 / NRRL B-23932 / Pf-5).